The primary structure comprises 414 residues: Peptidoglycan beta-N-acetylmuramidase NamZ (414 aa).

Residues 1–23 (MRKTIFAFLTGLMMFGTITAASA) form the signal peptide.

The protein belongs to the glycoside hydrolase 171 family. In terms of assembly, homodimer in solution.

It localises to the secreted. It carries out the reaction Hydrolysis of terminal, non-reducing N-acetylmuramic residues.. Functionally, catalyzes the exo-lytic cleavage of beta-1,4-N-acetylmuramate (beta-1,4-MurNAc) from the non-reducing ends of peptidoglycan chains. Specifically hydrolyzes the natural, peptidoglycan-derived disaccharide MurNAc-GlcNAc and the artificial substrate para-nitrophenyl beta-N-acetylmuramic acid (pNP-MurNAc). Requires a MurNAc entity at the non-reducing end, and cannot cleave GlcNAc-MurNAc. Probably plays a role in cell wall turnover and recycling. This Bacillus subtilis (strain 168) protein is Peptidoglycan beta-N-acetylmuramidase NamZ.